The chain runs to 98 residues: DNA-binding protein Fis (98 aa).

The segment at residues 74 to 93 (QTRAALMMGINRGTLRKKLK) is a DNA-binding region (H-T-H motif).

Belongs to the transcriptional regulatory Fis family. Homodimer.

Functionally, activates ribosomal RNA transcription. Plays a direct role in upstream activation of rRNA promoters. This is DNA-binding protein Fis from Photorhabdus laumondii subsp. laumondii (strain DSM 15139 / CIP 105565 / TT01) (Photorhabdus luminescens subsp. laumondii).